Here is a 748-residue protein sequence, read N- to C-terminus: Polyribonucleotide nucleotidyltransferase (748 aa).

Asp-487 and Asp-493 together coordinate Mg(2+). The KH domain occupies 554–613 (PSTTTIKIDKDKIRDIIGPSGKVIKEICETSGAKIDISDDGTVSVYASDRDKLKVALDKI). The 69-residue stretch at 623–691 (GEIFNGTVVK…NKGKAKLTIK (69 aa)) folds into the S1 motif domain. The segment at 693-733 (ADKDKSSNNTKPKTHVNNTKDNSEPEQRRDSSKKRAWNEDN) is disordered. Positions 699–712 (SNNTKPKTHVNNTK) are enriched in polar residues. The segment covering 713-722 (DNSEPEQRRD) has biased composition (basic and acidic residues).

The protein belongs to the polyribonucleotide nucleotidyltransferase family. Mg(2+) is required as a cofactor.

Its subcellular location is the cytoplasm. The enzyme catalyses RNA(n+1) + phosphate = RNA(n) + a ribonucleoside 5'-diphosphate. In terms of biological role, involved in mRNA degradation. Catalyzes the phosphorolysis of single-stranded polyribonucleotides processively in the 3'- to 5'-direction. The chain is Polyribonucleotide nucleotidyltransferase from Rickettsia peacockii (strain Rustic).